The following is a 166-amino-acid chain: Interferon gamma (166 aa).

The N-terminal stretch at 1 to 23 (MKYTSYFLALLLCVLLGFSGSYG) is a signal peptide. The residue at position 24 (Gln24) is a Pyrrolidone carboxylic acid. Asn39 and Asn106 each carry an N-linked (GlcNAc...) asparagine glycan.

It belongs to the type II (or gamma) interferon family. In terms of assembly, homodimer. Interacts with IFNGR1 (via extracellular domain); this interaction promotes IFNGR1 dimerization. In terms of tissue distribution, released primarily from activated T lymphocytes.

It localises to the secreted. Functionally, type II interferon produced by immune cells such as T-cells and NK cells that plays crucial roles in antimicrobial, antiviral, and antitumor responses by activating effector immune cells and enhancing antigen presentation. Primarily signals through the JAK-STAT pathway after interaction with its receptor IFNGR1 to affect gene regulation. Upon IFNG binding, IFNGR1 intracellular domain opens out to allow association of downstream signaling components JAK2, JAK1 and STAT1, leading to STAT1 activation, nuclear translocation and transcription of IFNG-regulated genes. Many of the induced genes are transcription factors such as IRF1 that are able to further drive regulation of a next wave of transcription. Plays a role in class I antigen presentation pathway by inducing a replacement of catalytic proteasome subunits with immunoproteasome subunits. In turn, increases the quantity, quality, and repertoire of peptides for class I MHC loading. Increases the efficiency of peptide generation also by inducing the expression of activator PA28 that associates with the proteasome and alters its proteolytic cleavage preference. Up-regulates as well MHC II complexes on the cell surface by promoting expression of several key molecules such as cathepsins B/CTSB, H/CTSH, and L/CTSL. Participates in the regulation of hematopoietic stem cells during development and under homeostatic conditions by affecting their development, quiescence, and differentiation. The sequence is that of Interferon gamma (IFNG) from Bubalus carabanensis (Swamp type water buffalo).